The following is a 349-amino-acid chain: UDP-N-acetylenolpyruvoylglucosamine reductase (349 aa).

The FAD-binding PCMH-type domain occupies glycine 25–glutamine 197. Residue arginine 173 is part of the active site. Serine 249 acts as the Proton donor in catalysis. Residue glutamate 345 is part of the active site.

This sequence belongs to the MurB family. The cofactor is FAD.

The protein resides in the cytoplasm. It carries out the reaction UDP-N-acetyl-alpha-D-muramate + NADP(+) = UDP-N-acetyl-3-O-(1-carboxyvinyl)-alpha-D-glucosamine + NADPH + H(+). Its pathway is cell wall biogenesis; peptidoglycan biosynthesis. Cell wall formation. The polypeptide is UDP-N-acetylenolpyruvoylglucosamine reductase (Burkholderia cenocepacia (strain HI2424)).